The chain runs to 1338 residues: Thioester-containing protein 1 allele R1 (1338 aa).

Residues Met-1–Gly-21 form the signal peptide. N-linked (GlcNAc...) asparagine glycosylation is found at Asn-68, Asn-199, Asn-242, Asn-312, and Asn-481. Residues Glu-580–Gly-609 are may contain the cleavage site. Asn-637, Asn-728, and Asn-813 each carry an N-linked (GlcNAc...) asparagine glycan. The segment at residues Cys-859–Gln-862 is a cross-link (isoglutamyl cysteine thioester (Cys-Gln)). N-linked (GlcNAc...) asparagine glycosylation is found at Asn-919 and Asn-1065. Disulfide bonds link Cys-1217–Cys-1283, Cys-1326–Cys-1338, and Cys-1329–Cys-1334.

Heterodimer of a TEP1-N chain and an TEP1-C chain non-covalently linked. Forms a complex composed of TEP1-N and TEP1-C heterodimer, LRIM1 and APL1C; the interaction stabilizes TEP1-N and TEP1-C heterodimer, prevents its binding to tissues while circulating in the hemolymph and protects the thioester bond from hydrolysis. Mature TEP1 and to a lesser extent full-length TEP1 interact with SPCLIP1; the interaction is induced by microbial infection. In the hemolymph, the full-length protein is cleaved by an unknow protease into a 75kDa N-terminal (TEP1-N) chain and an 80kDa C-terminal (TEP1-C) chain which remain non-covalently linked. The TEP1-C chain contains the thioester bond which covalently binds to the pathogen surface. Cleavage is induced by bacterial infection or aseptic wound injury. During embryonic and pupal development, the cleaved form is the predominant form. Post-translationally, N-glycosylated.

Its subcellular location is the secreted. Functionally, plays an essential role in the innate immune response against bacteria, fungi and protozoa infection. After proteolytic cleavage, the protein C-terminus binds covalently through a thioester bond to the pathogen surface resulting in pathogen clearance either by melanization or lysis. Initiate the recruitment and activation of a cascade of proteases, mostly of CLIP-domain serine proteases, which leads to the proteolytic cleavage of the prophenoloxidase (PPO) into active phenoloxidase (PO), the rate-limiting enzyme in melanin biosynthesis. In response to parasite P.berghei-mediated infection, binds to and mediates killing of ookinetes, as they egress from midgut epithelial cells into the basal labyrinth, by both lysis and melanization. During bacterial infection, binds to both Gram-positive and Gram-negative bacteria but only promotes phagocytosis of Gram-negative bacteria. Promotes the accumulation of SPCLIP1 onto the surface of P.berghei ookinetes and bacterium E.coli which leads to the melanization of the pathogen. Recruits CLIPA2 to bacteria surface. In response to bacterial infection, required for periostial hemocyte aggregation, but not for the aggregation of sessile hemocytes in non-periostial regions. During the late stage of fungus B.bassiana-mediated infection, required for the initiation of hyphae melanization by binding to the surface of hyphae and recruiting prophenoloxidase PPO to them. Plays a role in male fertility by binding to defective sperm cells and promoting their removal during spermatogenesis. Binds to and mediates killing of parasite P.bergei ookinetes by lysis and melanization. In terms of biological role, binds covalently through a thioester bond to the pathogen surface resulting in pathogen clearance. This is Thioester-containing protein 1 allele R1 from Anopheles gambiae (African malaria mosquito).